The primary structure comprises 344 residues: Anthranilate phosphoribosyltransferase (344 aa).

5-phospho-alpha-D-ribose 1-diphosphate is bound by residues Gly81, 84–85 (GD), Ser89, 91–94 (NIST), 109–117 (KHGNRALSS), and Ala121. Gly81 is a binding site for anthranilate. Mg(2+) is bound at residue Ser93. An anthranilate-binding site is contributed by Asn112. Arg167 provides a ligand contact to anthranilate. Asp226 and Glu227 together coordinate Mg(2+).

This sequence belongs to the anthranilate phosphoribosyltransferase family. As to quaternary structure, homodimer. Mg(2+) is required as a cofactor.

The catalysed reaction is N-(5-phospho-beta-D-ribosyl)anthranilate + diphosphate = 5-phospho-alpha-D-ribose 1-diphosphate + anthranilate. The protein operates within amino-acid biosynthesis; L-tryptophan biosynthesis; L-tryptophan from chorismate: step 2/5. Functionally, catalyzes the transfer of the phosphoribosyl group of 5-phosphorylribose-1-pyrophosphate (PRPP) to anthranilate to yield N-(5'-phosphoribosyl)-anthranilate (PRA). The polypeptide is Anthranilate phosphoribosyltransferase (Xanthobacter autotrophicus (strain ATCC BAA-1158 / Py2)).